Consider the following 419-residue polypeptide: Serine hydroxymethyltransferase 2 (419 aa).

(6S)-5,6,7,8-tetrahydrofolate is bound by residues leucine 120 and 124–126 (GHL). Lysine 229 is subject to N6-(pyridoxal phosphate)lysine.

The protein belongs to the SHMT family. As to quaternary structure, homodimer. Pyridoxal 5'-phosphate serves as cofactor.

It is found in the cytoplasm. The enzyme catalyses (6R)-5,10-methylene-5,6,7,8-tetrahydrofolate + glycine + H2O = (6S)-5,6,7,8-tetrahydrofolate + L-serine. It functions in the pathway one-carbon metabolism; tetrahydrofolate interconversion. It participates in amino-acid biosynthesis; glycine biosynthesis; glycine from L-serine: step 1/1. Catalyzes the reversible interconversion of serine and glycine with tetrahydrofolate (THF) serving as the one-carbon carrier. This reaction serves as the major source of one-carbon groups required for the biosynthesis of purines, thymidylate, methionine, and other important biomolecules. Also exhibits THF-independent aldolase activity toward beta-hydroxyamino acids, producing glycine and aldehydes, via a retro-aldol mechanism. The protein is Serine hydroxymethyltransferase 2 of Salmonella typhi.